The primary structure comprises 131 residues: Fumarate reductase subunit C (131 aa).

2 helical membrane-spanning segments follow: residues 60–80 and 110–130; these read FVGF…LAAA and IKGL…VALF.

It belongs to the FrdC family. As to quaternary structure, part of an enzyme complex containing four subunits: a flavoprotein (FrdA), an iron-sulfur protein (FrdB), and two hydrophobic anchor proteins (FrdC and FrdD).

It localises to the cell inner membrane. Functionally, two distinct, membrane-bound, FAD-containing enzymes are responsible for the catalysis of fumarate and succinate interconversion; fumarate reductase is used in anaerobic growth, and succinate dehydrogenase is used in aerobic growth. Anchors the catalytic components of the fumarate reductase complex to the cell inner membrane, binds quinones. The sequence is that of Fumarate reductase subunit C from Enterobacter sp. (strain 638).